A 424-amino-acid chain; its full sequence is Imidazolonepropionase (424 aa).

Residues H84 and H86 each contribute to the Fe(3+) site. Positions 84 and 86 each coordinate Zn(2+). 3 residues coordinate 4-imidazolone-5-propanoate: R93, Y156, and H189. Y156 is a binding site for N-formimidoyl-L-glutamate. H254 provides a ligand contact to Fe(3+). H254 is a Zn(2+) binding site. E257 contacts 4-imidazolone-5-propanoate. Position 328 (D328) interacts with Fe(3+). Residue D328 participates in Zn(2+) binding. Positions 330 and 332 each coordinate N-formimidoyl-L-glutamate. S333 serves as a coordination point for 4-imidazolone-5-propanoate.

Belongs to the metallo-dependent hydrolases superfamily. HutI family. Zn(2+) serves as cofactor. The cofactor is Fe(3+).

It is found in the cytoplasm. The enzyme catalyses 4-imidazolone-5-propanoate + H2O = N-formimidoyl-L-glutamate. Its pathway is amino-acid degradation; L-histidine degradation into L-glutamate; N-formimidoyl-L-glutamate from L-histidine: step 3/3. Catalyzes the hydrolytic cleavage of the carbon-nitrogen bond in imidazolone-5-propanoate to yield N-formimidoyl-L-glutamate. It is the third step in the universal histidine degradation pathway. In Geobacillus thermodenitrificans (strain NG80-2), this protein is Imidazolonepropionase.